The sequence spans 379 residues: Glucose-1-phosphate adenylyltransferase (379 aa).

Residues G164, 179-180 (EK), and S190 each bind alpha-D-glucose 1-phosphate.

Belongs to the bacterial/plant glucose-1-phosphate adenylyltransferase family. As to quaternary structure, homotetramer.

It carries out the reaction alpha-D-glucose 1-phosphate + ATP + H(+) = ADP-alpha-D-glucose + diphosphate. It participates in glycan biosynthesis; glycogen biosynthesis. Involved in the biosynthesis of ADP-glucose, a building block required for the elongation reactions to produce glycogen. Catalyzes the reaction between ATP and alpha-D-glucose 1-phosphate (G1P) to produce pyrophosphate and ADP-Glc. This is Glucose-1-phosphate adenylyltransferase from Streptococcus uberis (strain ATCC BAA-854 / 0140J).